We begin with the raw amino-acid sequence, 789 residues long: Endonuclease MutS2 (789 aa).

An ATP-binding site is contributed by 334–341; the sequence is GPNTGGKT. The disordered stretch occupies residues 690-714; sequence PEKDIQQSGTGKIMKSKTGDTKSEV. A Smr domain is found at 714–789; the sequence is VDVRGKNLEE…GMGVTIVELK (76 aa).

It belongs to the DNA mismatch repair MutS family. MutS2 subfamily. As to quaternary structure, homodimer. Binds to stalled ribosomes, contacting rRNA.

Its function is as follows. Endonuclease that is involved in the suppression of homologous recombination and thus may have a key role in the control of bacterial genetic diversity. Functionally, acts as a ribosome collision sensor, splitting the ribosome into its 2 subunits. Detects stalled/collided 70S ribosomes which it binds and splits by an ATP-hydrolysis driven conformational change. Acts upstream of the ribosome quality control system (RQC), a ribosome-associated complex that mediates the extraction of incompletely synthesized nascent chains from stalled ribosomes and their subsequent degradation. Probably generates substrates for RQC. This is Endonuclease MutS2 from Alkaliphilus metalliredigens (strain QYMF).